We begin with the raw amino-acid sequence, 580 residues long: Viral transcription factor IE2 (580 aa).

A compositionally biased stretch (basic and acidic residues) spans 1–11 (MESSAKRKMDP). Disordered stretches follow at residues 1-30 (MESS…TPVT) and 99-161 (DSSS…VIIK). Over residues 99–133 (DSSSTGPTLTTHSCSVSSAPLNKPTPTSVAVTNTP) the composition is skewed to polar residues. Glycyl lysine isopeptide (Lys-Gly) (interchain with G-Cter in SUMO) cross-links involve residues lysine 175 and lysine 180. An SUMO-interacting motif 1/SIM1 motif is present at residues 199 to 202 (CIVI). Serine 203 and serine 205 each carry phosphoserine; by host CK2. Residues 206–335 (EEEQGEEVET…KSKRISELDN (130 aa)) are disordered. Composition is skewed to low complexity over residues 216–236 (RGAT…TSPT), 259–271 (SSSS…SASD), and 302–317 (AASS…SSGG). Positions 410–413 (IQII) match the SUMO-interacting motif 1/SIM2 motif. An SUMO-interacting motif 1/SIM3 motif is present at residues 501 to 504 (VDLL).

It belongs to the HHV-5 IE2 protein family. In terms of assembly, interacts with host SUMO-modified form of TATA-binding protein (TBP)-associated factor 12/TAF12 in a SIM-dependent manner; this interaction increases the transactivation activity of IE2. Interacts with host CHAF1A. Interacts with several components of the host transcriptional machinery including TBP, TF2B and CREB1. Interacts with host DNA replication licensing factor MCM3. Interacts with host PLSCR1; this interaction inhibits IE2 transactivating activity. Post-translationally, phosphorylated by host CK2 at Ser-203 and Ser-205; leading to enhanced SUMOylation. SUMOylated; SUMOylation is enhanced when IE2 is phosphorylated by host CK2. The sumoylation is necessary for efficient replication of the virus and thus for the function of this viral transcription factor.

The protein resides in the host nucleus. In terms of biological role, stimulates viral early and late gene expression and thus play a crucial role in the regulation of productive infection. Selectively drives host RNA Pol II transcription initiation at a subset of viral early-late and late promoters without substantially affecting Pol II transcription of expressed host genes. Mechanistically, forms a repressive complex at the major immediate-early promoter region involving direct association with host nucleosomes and TBP. Concerning activation, stimulates transcription by binding nearby, but not within, core promoter regions. In addition, activates quiescent cells to reenter the cell cycle and up-regulates several E2F-responsive genes, which are responsible for pushing the cell into S phase. In S-phase, inhibits cellular DNA synthesis and blocks further cell cycle progression. The protein is Viral transcription factor IE2 (UL122) of Human cytomegalovirus (strain AD169) (HHV-5).